Consider the following 245-residue polypeptide: Eukaryotic translation initiation factor 6 (245 aa).

The protein belongs to the eIF-6 family. In terms of assembly, monomer. Associates with the 60S ribosomal subunit.

The protein resides in the cytoplasm. It localises to the nucleus. Its subcellular location is the nucleolus. In terms of biological role, binds to the 60S ribosomal subunit and prevents its association with the 40S ribosomal subunit to form the 80S initiation complex in the cytoplasm. May also be involved in ribosome biogenesis. This chain is Eukaryotic translation initiation factor 6 (eif6), found in Danio rerio (Zebrafish).